A 574-amino-acid polypeptide reads, in one-letter code: Sulfate adenylyltransferase (574 aa).

Residues Met1–Tyr170 are N-terminal. Residues Asp171–Glu395 form a catalytic region. Gln198 lines the sulfate pocket. ATP contacts are provided by residues Gln198–Asn201 and Gly292–His295. Catalysis depends on residues Thr199, Arg200, and Asn201. Residue Arg200 participates in sulfate binding. Residue Ala296 coordinates sulfate. Residue Met334 coordinates ATP. The interval Lys396–Leu574 is allosteric regulation domain; adenylyl-sulfate kinase-like. 3'-phosphoadenylyl sulfate contacts are provided by residues Glu435 to Arg438, Arg452, Ile478 to Ala479, and Lys516.

The protein in the N-terminal section; belongs to the sulfate adenylyltransferase family. This sequence in the C-terminal section; belongs to the APS kinase family. As to quaternary structure, homohexamer. Dimer of trimers.

It localises to the cytoplasm. The catalysed reaction is sulfate + ATP + H(+) = adenosine 5'-phosphosulfate + diphosphate. The protein operates within sulfur metabolism; hydrogen sulfide biosynthesis; sulfite from sulfate: step 1/3. Its activity is regulated as follows. Allosterically inhibited by 3'-phosphoadenosine 5'-phosphosulfate (PAPS). Functionally, catalyzes the first intracellular reaction of sulfate assimilation, forming adenosine-5'-phosphosulfate (APS) from inorganic sulfate and ATP. Plays an important role in sulfate activation as a component of the biosynthesis pathway of sulfur-containing amino acids. The sequence is that of Sulfate adenylyltransferase from Gibberella zeae (strain ATCC MYA-4620 / CBS 123657 / FGSC 9075 / NRRL 31084 / PH-1) (Wheat head blight fungus).